Consider the following 138-residue polypeptide: NADH dehydrogenase [ubiquinone] iron-sulfur protein 2, mitochondrial (138 aa).

This sequence belongs to the complex I 49 kDa subunit family. As to quaternary structure, core subunit of respiratory chain NADH dehydrogenase (Complex I) which is composed of 45 different subunits. Component of the iron-sulfur (IP) fragment of the enzyme. Interacts with NDUFAF3. Interacts with NDUFAF7. Interacts with CERS2. [4Fe-4S] cluster serves as cofactor. In terms of processing, dimethylation at Arg-118 by NDUFAF7 takes place after NDUFS2 assembles into the complex I, leading to stabilize the early intermediate complex.

Its subcellular location is the mitochondrion inner membrane. It carries out the reaction a ubiquinone + NADH + 5 H(+)(in) = a ubiquinol + NAD(+) + 4 H(+)(out). Its function is as follows. Core subunit of the mitochondrial membrane respiratory chain NADH dehydrogenase (Complex I) which catalyzes electron transfer from NADH through the respiratory chain, using ubiquinone as an electron acceptor. Essential for the catalytic activity and assembly of complex I. Redox-sensitive, critical component of the oxygen-sensing pathway in the pulmonary vasculature which plays a key role in acute pulmonary oxygen-sensing and hypoxic pulmonary vasoconstriction. Plays an important role in carotid body sensing of hypoxia. Essential for glia-like neural stem and progenitor cell proliferation, differentiation and subsequent oligodendrocyte or neuronal maturation. The sequence is that of NADH dehydrogenase [ubiquinone] iron-sulfur protein 2, mitochondrial from Mesocricetus auratus (Golden hamster).